Here is a 405-residue protein sequence, read N- to C-terminus: Interferon alpha/beta receptor 1a (405 aa).

The first 20 residues, 1-20, serve as a signal peptide directing secretion; that stretch reads MKVGFALVLLWSLPITNVLA. The Extracellular segment spans residues 21–233; sequence ELPQPQNLTL…QTEGDTPYGQ (213 aa). 2 consecutive Fibronectin type-III domains span residues 22 to 123 and 126 to 228; these read LPQP…IDAS and PPSR…TEGD. 2 N-linked (GlcNAc...) asparagine glycosylation sites follow: N27 and N70. 2 disulfides stabilise this stretch: C75-C83 and C201-C222. N212 carries N-linked (GlcNAc...) asparagine glycosylation. The chain crosses the membrane as a helical span at residues 234–254; sequence IFLYFLVSMMVCFLLVLLSSY. Over 255–405 the chain is Cytoplasmic; that stretch reads AFFRFYRGLK…LDEGVVDICV (151 aa). The tract at residues 325–374 is disordered; that stretch reads TAPPSELEQDSGRRIRQDSGDSGIYSTEGGSAQQGRSGGEPIRRDQEVDS. Residues 334–343 show a composition bias toward basic and acidic residues; that stretch reads DSGRRIRQDS. Residues 348–359 show a composition bias toward polar residues; it reads IYSTEGGSAQQG.

It belongs to the type II cytokine receptor family. In terms of assembly, heterodimer with IFNAR2; forming the receptor for type I interferon.

It is found in the cell membrane. Together with IFNAR2, forms the heterodimeric receptor for type I interferons (including interferons alpha, beta, epsilon, omega and kappa). Type I interferon binding activates the JAK-STAT signaling cascade, resulting in transcriptional activation or repression of interferon-regulated genes that encode the effectors of the interferon response. Mechanistically, type I interferon-binding brings the IFNAR1 and IFNAR2 subunits into close proximity with one another, driving their associated Janus kinases (JAKs) (TYK2 bound to IFNAR1 and JAK1 bound to IFNAR2) to cross-phosphorylate one another. The activated kinases phosphorylate specific tyrosine residues on the intracellular domains of IFNAR1 and IFNAR2, forming docking sites for the STAT transcription factors. STAT proteins are then phosphorylated by the JAKs, promoting their translocation into the nucleus to regulate expression of interferon-regulated genes. This is Interferon alpha/beta receptor 1a from Oncorhynchus mykiss (Rainbow trout).